A 380-amino-acid polypeptide reads, in one-letter code: Cytochrome b (380 aa).

A run of 4 helical transmembrane segments spans residues 34-54 (FGSL…LLAA), 78-99 (WLIR…YLHI), 114-134 (WNTG…GYVL), and 179-199 (FFAL…IHLA). His-84 and His-98 together coordinate heme b. His-183 and His-197 together coordinate heme b. His-202 serves as a coordination point for a ubiquinone. 4 helical membrane passes run 227–247 (LKDI…ALFS), 289–309 (LGGV…PLLH), 321–341 (LSQL…WIGS), and 348–368 (FIII…ILFP).

It belongs to the cytochrome b family. As to quaternary structure, the cytochrome bc1 complex contains 11 subunits: 3 respiratory subunits (MT-CYB, CYC1 and UQCRFS1), 2 core proteins (UQCRC1 and UQCRC2) and 6 low-molecular weight proteins (UQCRH/QCR6, UQCRB/QCR7, UQCRQ/QCR8, UQCR10/QCR9, UQCR11/QCR10 and a cleavage product of UQCRFS1). This cytochrome bc1 complex then forms a dimer. The cofactor is heme b.

It localises to the mitochondrion inner membrane. Functionally, component of the ubiquinol-cytochrome c reductase complex (complex III or cytochrome b-c1 complex) that is part of the mitochondrial respiratory chain. The b-c1 complex mediates electron transfer from ubiquinol to cytochrome c. Contributes to the generation of a proton gradient across the mitochondrial membrane that is then used for ATP synthesis. The protein is Cytochrome b (MT-CYB) of Cyrtonyx montezumae (Montezuma quail).